Consider the following 177-residue polypeptide: Bifunctional protein PyrR (177 aa).

Positions 101–113 (IILIDDVLYTGRT) match the PRPP-binding motif.

The protein belongs to the purine/pyrimidine phosphoribosyltransferase family. PyrR subfamily.

It carries out the reaction UMP + diphosphate = 5-phospho-alpha-D-ribose 1-diphosphate + uracil. Regulates the transcription of the pyrimidine nucleotide (pyr) operon in response to exogenous pyrimidines. Functionally, also displays a weak uracil phosphoribosyltransferase activity which is not physiologically significant. The chain is Bifunctional protein PyrR from Endomicrobium trichonymphae.